The following is a 361-amino-acid chain: MSSGAGKVYKVLVVDDSALMRKILVEILNQSPCLEVVDTAGDPYQARDKIKALSPDVITLDVEMPRMDGLTFLRNLMRLRPMPVVMISSLTEQGAAVTLDALEYGAVDFIAKPKIDLREGIEEKAQEIIDKVITAARIPHDKLLLKQQRLQTQHQKAAVGERPQPVFATTDKLIAVGASTGGLDAIRDLLDGLNMDLPGIVIAQHIPGAFSRSFAERLDRRLPMKVEEAYDNAPITMGRVYIAPGEYHLEVVRTGAKYVCRLSEAPPVNRHRPSVDVLFDSIVSAAGANAMAALLTGMGKDGAAGLLRLHEAGAYTIAQDEASSVVWGMPGAAVKLNAADDVLPLEKIAASVKRWYAENPG.

One can recognise a Response regulatory domain in the interval 10–127 (KVLVVDDSAL…REGIEEKAQE (118 aa)). Position 61 is a 4-aspartylphosphate (Asp61). Positions 167–359 (FATTDKLIAV…ASVKRWYAEN (193 aa)) constitute a CheB-type methylesterase domain. Residues Ser179, His205, and Asp301 contribute to the active site.

The protein belongs to the CheB family. In terms of processing, phosphorylated by CheA. Phosphorylation of the N-terminal regulatory domain activates the methylesterase activity.

The protein resides in the cytoplasm. It catalyses the reaction [protein]-L-glutamate 5-O-methyl ester + H2O = L-glutamyl-[protein] + methanol + H(+). The catalysed reaction is L-glutaminyl-[protein] + H2O = L-glutamyl-[protein] + NH4(+). Functionally, involved in chemotaxis. Part of a chemotaxis signal transduction system that modulates chemotaxis in response to various stimuli. Catalyzes the demethylation of specific methylglutamate residues introduced into the chemoreceptors (methyl-accepting chemotaxis proteins or MCP) by CheR. Also mediates the irreversible deamidation of specific glutamine residues to glutamic acid. This Hahella chejuensis (strain KCTC 2396) protein is Protein-glutamate methylesterase/protein-glutamine glutaminase 1.